Reading from the N-terminus, the 286-residue chain is 2-dehydro-3-deoxyphosphooctonate aldolase (286 aa).

Belongs to the KdsA family.

The protein localises to the cytoplasm. The catalysed reaction is D-arabinose 5-phosphate + phosphoenolpyruvate + H2O = 3-deoxy-alpha-D-manno-2-octulosonate-8-phosphate + phosphate. The protein operates within carbohydrate biosynthesis; 3-deoxy-D-manno-octulosonate biosynthesis; 3-deoxy-D-manno-octulosonate from D-ribulose 5-phosphate: step 2/3. Its pathway is bacterial outer membrane biogenesis; lipopolysaccharide biosynthesis. This Bradyrhizobium sp. (strain BTAi1 / ATCC BAA-1182) protein is 2-dehydro-3-deoxyphosphooctonate aldolase.